A 152-amino-acid chain; its full sequence is UPF0756 membrane protein Moth_1009 (152 aa).

4 helical membrane passes run 5–25 (LIIL…VALA), 41–61 (IFPF…IAAI), 75–95 (LGHV…LITT), and 117–137 (LILG…GPFI).

This sequence belongs to the UPF0756 family.

It is found in the cell membrane. This is UPF0756 membrane protein Moth_1009 from Moorella thermoacetica (strain ATCC 39073 / JCM 9320).